Here is a 425-residue protein sequence, read N- to C-terminus: Serine--tRNA ligase (425 aa).

Residue 230–232 participates in L-serine binding; that stretch reads TAE. An ATP-binding site is contributed by 261–263; it reads RSE. L-serine is bound at residue E284. 348-351 contacts ATP; that stretch reads EISS. S384 serves as a coordination point for L-serine.

This sequence belongs to the class-II aminoacyl-tRNA synthetase family. Type-1 seryl-tRNA synthetase subfamily. In terms of assembly, homodimer. The tRNA molecule binds across the dimer.

It localises to the cytoplasm. The catalysed reaction is tRNA(Ser) + L-serine + ATP = L-seryl-tRNA(Ser) + AMP + diphosphate + H(+). It catalyses the reaction tRNA(Sec) + L-serine + ATP = L-seryl-tRNA(Sec) + AMP + diphosphate + H(+). It participates in aminoacyl-tRNA biosynthesis; selenocysteinyl-tRNA(Sec) biosynthesis; L-seryl-tRNA(Sec) from L-serine and tRNA(Sec): step 1/1. Catalyzes the attachment of serine to tRNA(Ser). Is also able to aminoacylate tRNA(Sec) with serine, to form the misacylated tRNA L-seryl-tRNA(Sec), which will be further converted into selenocysteinyl-tRNA(Sec). The chain is Serine--tRNA ligase from Streptococcus gordonii (strain Challis / ATCC 35105 / BCRC 15272 / CH1 / DL1 / V288).